Reading from the N-terminus, the 341-residue chain is Holliday junction branch migration complex subunit RuvB (341 aa).

The interval 1–21 (MSQPDPMLRPEPLESDGEDRA) is disordered. Residues 4–183 (PDPMLRPEPL…FGIPTRLQFY (180 aa)) form a large ATPase domain (RuvB-L) region. ATP contacts are provided by residues leucine 22, arginine 23, glycine 64, lysine 67, threonine 68, threonine 69, 130–132 (EDF), arginine 173, tyrosine 183, and arginine 220. Threonine 68 lines the Mg(2+) pocket. The interval 184 to 254 (TIEELDLIVT…IADSALTRLG (71 aa)) is small ATPAse domain (RuvB-S). Residues 257-341 (HLGLDTADRR…PRTQESLFDE (85 aa)) form a head domain (RuvB-H) region. The DNA site is built by arginine 293, arginine 312, and arginine 317.

This sequence belongs to the RuvB family. As to quaternary structure, homohexamer. Forms an RuvA(8)-RuvB(12)-Holliday junction (HJ) complex. HJ DNA is sandwiched between 2 RuvA tetramers; dsDNA enters through RuvA and exits via RuvB. An RuvB hexamer assembles on each DNA strand where it exits the tetramer. Each RuvB hexamer is contacted by two RuvA subunits (via domain III) on 2 adjacent RuvB subunits; this complex drives branch migration. In the full resolvosome a probable DNA-RuvA(4)-RuvB(12)-RuvC(2) complex forms which resolves the HJ.

The protein resides in the cytoplasm. It catalyses the reaction ATP + H2O = ADP + phosphate + H(+). In terms of biological role, the RuvA-RuvB-RuvC complex processes Holliday junction (HJ) DNA during genetic recombination and DNA repair, while the RuvA-RuvB complex plays an important role in the rescue of blocked DNA replication forks via replication fork reversal (RFR). RuvA specifically binds to HJ cruciform DNA, conferring on it an open structure. The RuvB hexamer acts as an ATP-dependent pump, pulling dsDNA into and through the RuvAB complex. RuvB forms 2 homohexamers on either side of HJ DNA bound by 1 or 2 RuvA tetramers; 4 subunits per hexamer contact DNA at a time. Coordinated motions by a converter formed by DNA-disengaged RuvB subunits stimulates ATP hydrolysis and nucleotide exchange. Immobilization of the converter enables RuvB to convert the ATP-contained energy into a lever motion, pulling 2 nucleotides of DNA out of the RuvA tetramer per ATP hydrolyzed, thus driving DNA branch migration. The RuvB motors rotate together with the DNA substrate, which together with the progressing nucleotide cycle form the mechanistic basis for DNA recombination by continuous HJ branch migration. Branch migration allows RuvC to scan DNA until it finds its consensus sequence, where it cleaves and resolves cruciform DNA. The sequence is that of Holliday junction branch migration complex subunit RuvB from Paracoccus denitrificans (strain Pd 1222).